Consider the following 452-residue polypeptide: Multifunctional glycoside hydrolase (452 aa).

Residues glutamine 17, histidine 118, and asparagine 162 each coordinate substrate. Glutamate 163 (proton donor) is an active-site residue. Substrate is bound at residue tyrosine 303. Residue glutamate 361 is the Nucleophile of the active site. Substrate is bound by residues tryptophan 407 and 414–415; that span reads EW.

It belongs to the glycosyl hydrolase 1 family. Monomer. Homotrimer.

It catalyses the reaction Hydrolysis of terminal, non-reducing beta-D-glucosyl residues with release of beta-D-glucose.. The enzyme catalyses Hydrolysis of terminal non-reducing beta-D-galactose residues in beta-D-galactosides.. The catalysed reaction is Hydrolysis of (1-&gt;4)-beta-D-xylans, to remove successive D-xylose residues from the non-reducing termini.. It carries out the reaction Hydrolysis of (1-&gt;4)-linkages in (1-&gt;4)-beta-D-glucans, to remove successive glucose units.. It catalyses the reaction Hydrolysis of (1-&gt;4)-beta-D-glucosidic linkages in cellulose and cellotetraose, releasing cellobiose from the non-reducing ends of the chains.. It functions in the pathway glycan metabolism; beta-D-glucan degradation. The protein operates within glycan metabolism; cellulose degradation. With respect to regulation, slight activation by Mn(2+), Ni(2+) and K(+). Slight inhibition by Fe(3+), Zn(2+), Co(2+), Mg(2+), Cu(2+), Na(+) and NH4(+). Its function is as follows. Has high beta-D-glucosidase, exoglucanase, beta-D-xylosidase, beta-D-galactosidase, and transgalactosylation activities in vitro. Has a very broad substrate specificity with the highest activity with p-nitrophenyl beta-D-galactopyranoside (pNPGal) as substrate. Active with pNP-beta-D-glucopyranoside (pNPGlu), pNP-beta-D-cellobioside (pNPC), lactose, pNP-beta-D-xylopyranoside (pNPX) and cellobiose in the order of decreasing activity, respectively. Very low activity with soluble polysaccharides synanthrin and locust bean gum. Very low, but detectable activity with insoluble substrates such as cotton and filter paper. No activity with pNP-alpha-L-arabinofuranoside (pNPAr) or carboxymethylcellulose (CMC) as substrates. Synthesizes galactooligosaccharides (GalOS) from lactose. Hydrolyzes pretreated corn stover releasing both glucose and xylose. This multifunctional enzyme may provide C.owensensis the benefit of utilizing a wide variety of available carbon sources in its natural growing environment as the ability to convert a wide range of soluble oligosaccharides to monoses is required in order to assimilate them. This is Multifunctional glycoside hydrolase from Caldicellulosiruptor owensensis (strain ATCC 700167 / DSM 13100 / OL).